Reading from the N-terminus, the 494-residue chain is Ribosomal lysine N-methyltransferase 4 (494 aa).

Positions P25–G265 constitute an SET domain. Y264 is a binding site for S-adenosyl-L-methionine.

The protein belongs to the class V-like SAM-binding methyltransferase superfamily. Histone-lysine methyltransferase family. SETD6 subfamily.

The protein resides in the nucleus. S-adenosyl-L-methionine-dependent protein-lysine N-methyltransferase that monomethylates 60S ribosomal protein L42 (RPL42A and RPL42B) at 'Lys-55'. The chain is Ribosomal lysine N-methyltransferase 4 from Saccharomyces cerevisiae (strain ATCC 204508 / S288c) (Baker's yeast).